The primary structure comprises 258 residues: Transcriptional repressor AccR (258 aa).

An HTH deoR-type domain is found at threonine 6–serine 61. A DNA-binding region (H-T-H motif) is located at residues leucine 23–aspartate 42.

Functionally, represses opine catabolism and conjugal transfer of the nopaline Ti plasmid pTiC58. The polypeptide is Transcriptional repressor AccR (accR) (Agrobacterium fabrum (strain C58 / ATCC 33970) (Agrobacterium tumefaciens (strain C58))).